The primary structure comprises 117 residues: Ig heavy chain V region G4 (117 aa).

The first 19 residues, 1–19, serve as a signal peptide directing secretion; that stretch reads MTHWLCFTLALVAVRGVLS. The segment at 20 to 49 is framework-1; that stretch reads EIQLVESGGAIRKPGDSLRLSCKASGFTFS. Cys-41 and Cys-115 are disulfide-bonded. The segment at 50–54 is complementarity-determining-1; sequence DTWMA. The segment at 55–68 is framework-2; sequence WARQPPGKGLQWVG. The tract at residues 69-85 is complementarity-determining-2; the sequence is EINGNSETIRYAPEVKG. The framework-3 stretch occupies residues 86–117; it reads RLTISRDNTQNLLFLQISSLKPEDTATYYCAR.

This is Ig heavy chain V region G4 (G4) from Caiman crocodilus (Spectacled caiman).